We begin with the raw amino-acid sequence, 944 residues long: Neutral alpha-glucosidase AB (944 aa).

The signal sequence occupies residues Met1–Ala32. Cys41 and Cys47 form a disulfide bridge. A Phosphoserine modification is found at Ser52. Asn97 carries an N-linked (GlcNAc...) asparagine glycan. The interval His180–Pro238 is disordered. The segment covering Asp207 to Ser236 has biased composition (basic and acidic residues). The substrate site is built by Asp283 and Asp429. The active-site Nucleophile is Asp542. Arg602 provides a ligand contact to substrate. Asp618 serves as the catalytic Proton donor. The cysteines at positions 633 and 644 are disulfide-linked. His676 provides a ligand contact to substrate.

This sequence belongs to the glycosyl hydrolase 31 family. In terms of assembly, heterodimer of a catalytic alpha subunit (GANAB) and a beta subunit (PRKCSH). Binds glycosylated PTPRC.

Its subcellular location is the endoplasmic reticulum. It is found in the golgi apparatus. It localises to the melanosome. It carries out the reaction N(4)-(alpha-D-Glc-(1-&gt;3)-alpha-D-Man-(1-&gt;2)-alpha-D-Man-(1-&gt;2)-alpha-D-Man-(1-&gt;3)-[alpha-D-Man-(1-&gt;2)-alpha-D-Man-(1-&gt;3)-[alpha-D-Man-(1-&gt;2)-alpha-D-Man-(1-&gt;6)]-alpha-D-Man-(1-&gt;6)]-beta-D-Man-(1-&gt;4)-beta-D-GlcNAc-(1-&gt;4)-beta-D-GlcNAc)-L-asparaginyl-[protein] + H2O = N(4)-(alpha-D-Man-(1-&gt;2)-alpha-D-Man-(1-&gt;2)-alpha-D-Man-(1-&gt;3)-[alpha-D-Man-(1-&gt;2)-alpha-D-Man-(1-&gt;3)-[alpha-D-Man-(1-&gt;2)-alpha-D-Man-(1-&gt;6)]-alpha-D-Man-(1-&gt;6)]-beta-D-Man-(1-&gt;4)-beta-D-GlcNAc-(1-&gt;4)-beta-D-GlcNAc)-L-asparaginyl-[protein] (N-glucan mannose isomer 9A1,2,3B1,2,3) + beta-D-glucose. It catalyses the reaction N(4)-(alpha-D-Glc-(1-&gt;3)-alpha-D-Glc-(1-&gt;3)-alpha-D-Man-(1-&gt;2)-alpha-D-Man-(1-&gt;2)-alpha-D-Man-(1-&gt;3)-[alpha-D-Man-(1-&gt;2)-alpha-D-Man-(1-&gt;3)-[alpha-D-Man-(1-&gt;2)-alpha-D-Man-(1-&gt;6)]-alpha-D-Man-(1-&gt;6)]-beta-D-Man-(1-&gt;4)-beta-D-GlcNAc-(1-&gt;4)-beta-D-GlcNAc)-L-asparaginyl-[protein] + H2O = N(4)-(alpha-D-Glc-(1-&gt;3)-alpha-D-Man-(1-&gt;2)-alpha-D-Man-(1-&gt;2)-alpha-D-Man-(1-&gt;3)-[alpha-D-Man-(1-&gt;2)-alpha-D-Man-(1-&gt;3)-[alpha-D-Man-(1-&gt;2)-alpha-D-Man-(1-&gt;6)]-alpha-D-Man-(1-&gt;6)]-beta-D-Man-(1-&gt;4)-beta-D-GlcNAc-(1-&gt;4)-beta-D-GlcNAc)-L-asparaginyl-[protein] + beta-D-glucose. It participates in glycan metabolism; N-glycan metabolism. Its function is as follows. Catalytic subunit of glucosidase II that cleaves sequentially the 2 innermost alpha-1,3-linked glucose residues from the Glc(2)Man(9)GlcNAc(2) oligosaccharide precursor of immature glycoproteins. Required for PKD1/Polycystin-1 and PKD2/Polycystin-2 maturation and localization to the cell surface and cilia. The protein is Neutral alpha-glucosidase AB of Mus musculus (Mouse).